A 243-amino-acid chain; its full sequence is Ubiquinone/menaquinone biosynthesis C-methyltransferase UbiE (243 aa).

S-adenosyl-L-methionine-binding positions include T69, D90, and D116–A117.

Belongs to the class I-like SAM-binding methyltransferase superfamily. MenG/UbiE family.

It carries out the reaction a 2-demethylmenaquinol + S-adenosyl-L-methionine = a menaquinol + S-adenosyl-L-homocysteine + H(+). The catalysed reaction is a 2-methoxy-6-(all-trans-polyprenyl)benzene-1,4-diol + S-adenosyl-L-methionine = a 5-methoxy-2-methyl-3-(all-trans-polyprenyl)benzene-1,4-diol + S-adenosyl-L-homocysteine + H(+). It functions in the pathway quinol/quinone metabolism; menaquinone biosynthesis; menaquinol from 1,4-dihydroxy-2-naphthoate: step 2/2. Its pathway is cofactor biosynthesis; ubiquinone biosynthesis. Its function is as follows. Methyltransferase required for the conversion of demethylmenaquinol (DMKH2) to menaquinol (MKH2) and the conversion of 2-polyprenyl-6-methoxy-1,4-benzoquinol (DDMQH2) to 2-polyprenyl-3-methyl-6-methoxy-1,4-benzoquinol (DMQH2). This Cupriavidus taiwanensis (strain DSM 17343 / BCRC 17206 / CCUG 44338 / CIP 107171 / LMG 19424 / R1) (Ralstonia taiwanensis (strain LMG 19424)) protein is Ubiquinone/menaquinone biosynthesis C-methyltransferase UbiE.